Here is a 254-residue protein sequence, read N- to C-terminus: NAD kinase (254 aa).

Residue Asp-44 is the Proton acceptor of the active site. Residues 44–45 (DG), 114–115 (NE), Asp-144, Ala-152, 155–160 (TAYNYS), and Ala-179 each bind NAD(+).

This sequence belongs to the NAD kinase family. The cofactor is a divalent metal cation.

It localises to the cytoplasm. It catalyses the reaction NAD(+) + ATP = ADP + NADP(+) + H(+). Its function is as follows. Involved in the regulation of the intracellular balance of NAD and NADP, and is a key enzyme in the biosynthesis of NADP. Catalyzes specifically the phosphorylation on 2'-hydroxyl of the adenosine moiety of NAD to yield NADP. This Cereibacter sphaeroides (strain ATCC 17025 / ATH 2.4.3) (Rhodobacter sphaeroides) protein is NAD kinase.